Reading from the N-terminus, the 329-residue chain is 4-hydroxythreonine-4-phosphate dehydrogenase (329 aa).

Substrate contacts are provided by His-137 and Thr-138. Residues His-167, His-212, and His-267 each contribute to the a divalent metal cation site. Residues Lys-275, Asn-284, and Arg-293 each contribute to the substrate site.

Belongs to the PdxA family. As to quaternary structure, homodimer. Requires Zn(2+) as cofactor. It depends on Mg(2+) as a cofactor. Co(2+) is required as a cofactor.

The protein resides in the cytoplasm. It catalyses the reaction 4-(phosphooxy)-L-threonine + NAD(+) = 3-amino-2-oxopropyl phosphate + CO2 + NADH. Its pathway is cofactor biosynthesis; pyridoxine 5'-phosphate biosynthesis; pyridoxine 5'-phosphate from D-erythrose 4-phosphate: step 4/5. Functionally, catalyzes the NAD(P)-dependent oxidation of 4-(phosphooxy)-L-threonine (HTP) into 2-amino-3-oxo-4-(phosphooxy)butyric acid which spontaneously decarboxylates to form 3-amino-2-oxopropyl phosphate (AHAP). The chain is 4-hydroxythreonine-4-phosphate dehydrogenase from Stutzerimonas stutzeri (strain A1501) (Pseudomonas stutzeri).